The primary structure comprises 177 residues: Large ribosomal subunit protein uL6 (177 aa).

The protein belongs to the universal ribosomal protein uL6 family. As to quaternary structure, part of the 50S ribosomal subunit.

Functionally, this protein binds to the 23S rRNA, and is important in its secondary structure. It is located near the subunit interface in the base of the L7/L12 stalk, and near the tRNA binding site of the peptidyltransferase center. The chain is Large ribosomal subunit protein uL6 from Klebsiella pneumoniae (strain 342).